The following is a 371-amino-acid chain: Gustatory receptor-like 65a (371 aa).

The Cytoplasmic segment spans residues 1 to 13 (MREVNLLNRFTRQ). Residues 14 to 34 (FLFLIVLVTQICGVATFVYNS) traverse the membrane as a helical segment. Over 35–42 (KAQCFRQS) the chain is Extracellular. The helical transmembrane segment at 43 to 63 (GFLRFYSSLVLIFLALFLIVT) threads the bilayer. The Cytoplasmic portion of the chain corresponds to 64–72 (TSKMFHNLQ). A helical transmembrane segment spans residues 73 to 93 (AVWPYVVGSVIILVVRIHGLL). At 94-126 (ESAEIVELLNQMLRIMRQVNLMARHPNLFRLKH) the chain is on the extracellular side. Residues 127-147 (LLLLLLALQNLLRSLNTIVGI) form a helical membrane-spanning segment. The Cytoplasmic segment spans residues 148–161 (SNHSAEAYDSFLNS). Residues 162–182 (VILLIILAVLLSFLLQITINI) form a helical membrane-spanning segment. Residues 183–251 (CLFVVLIATY…FHITVRIIRH (69 aa)) are Extracellular-facing. The chain crosses the membrane as a helical span at residues 252–272 (FRFHWLCAIIYGLLPFFSLTA). Residues 273 to 277 (KDQNG) lie on the Cytoplasmic side of the membrane. The helical transmembrane segment at 278-298 (FNFLIISALNIIFQWTIFAIL) threads the bilayer. Residues 299-371 (SRESRITRSL…FVNRLEYLHI (73 aa)) lie on the Extracellular side of the membrane.

Its subcellular location is the cell membrane. This chain is Gustatory receptor-like 65a, found in Drosophila melanogaster (Fruit fly).